A 233-amino-acid chain; its full sequence is RNA/RNP complex-1-interacting phosphatase homolog (233 aa).

Residues 1 to 14 (MSNYHHNHNYQHRP) are compositionally biased toward basic residues. Residues 1–21 (MSNYHHNHNYQHRPRGYERLP) form a disordered region. The Tyrosine-protein phosphatase domain maps to 34 to 206 (NVGRDIDGTR…LYEAERKKKY (173 aa)). The active-site Phosphocysteine intermediate is Cys150. Residue 151-156 (THGLNR) coordinates substrate. Residue Arg156 is the Proton donor/acceptor of the active site. Residues 204–233 (KKYGKSSGKSSGNSADSTISSEQLHRNNSQ) are disordered. A compositionally biased stretch (low complexity) spans 208 to 217 (KSSGKSSGNS). Polar residues predominate over residues 218-233 (ADSTISSEQLHRNNSQ).

The protein belongs to the protein-tyrosine phosphatase family. Non-receptor class dual specificity subfamily. In terms of assembly, interacts with the ERI/DICER complex component dcr-1. Interacts with ERI/DICER complex components rrf-3 and isoform b of eri-1. Interacts with drh-3 and rde-8.

It localises to the cytoplasm. The protein localises to the nucleus. Functionally, RNA polyphosphatase which has RNA 5'-triphosphatase and diphosphatase activities. Displays poor protein-tyrosine phosphatase activity. Binds to 5'-triphosphorylated RNAs (also called ppp-RNAs). Dephosphorylates ppp-RNAs converting them to 5'-monophosphorylated RNAs (also called p-RNAs). During small-RNA-mediated gene-silencing or RNA interference (RNAi), involved in the dcr-1-mediated processing of an amplified dsRNA intermediate. This is most likely in association with several components of the ERI/DICER complex including dcr-1, eri-1 and rrf-3. Plays a role in the biogenesis of 26G small interfering RNAs (26G-siRNAs), which are a class of 26 nucleotide siRNAs that possess a guanine residue at the 5'-end, by dephosphorylating 5'-triphosphorylated 26G-siRNAs prior to their maturation by the ERI/DICER complex. Plays a role in the biogenesis of csr-1-bound 22G small interfering RNAs (22G-siRNAs), which are a class of 22 nucleotide siRNAs that possess a guanine residue at the 5'-end. Not required for the biogenesis of microRNAs (miRNA) or for the biogenesis of a class of 21 nucleotide PIWI-interacting RNAs (piRNAs) that possess a uracil residue at the 5'-end (also called 21U-RNAs). In Caenorhabditis elegans, this protein is RNA/RNP complex-1-interacting phosphatase homolog.